We begin with the raw amino-acid sequence, 486 residues long: MSYYPYYQTENSDYSSFNSLMADICEPSPSSSSSRKRPADSENGNSAKMPVVIPMQPVQNFTMQYPIDNGWQNFNMIHQVYNNNNMNQPGYGWVGQPPPMPQDFYKARPGQTVTPPMNEFHNAHGTQQTPNDNSGNLPISSVMYTPESDLSTTSANFTPDWNTTTNGPCNQEKRNKENLFPNDDTSSGKLFDYFLTNTERENESENNIPHPYNKAVFPTFGVPVSSDGNVVAEVVDGRLPAVGTRSKYDLTVDELRRRCGAPEHMNQSALYCFFRKSKKKEAINRVKKVLTDYNITVRTMQRQRKVTCFSPFLEEEATALARDLDSITEEFLPIDAIALEMLEKLIFNNKNLDICLRILKNTNKTITRVIKTLEVRQPKITGQKEKLKGNSLDLSYHNFSLTTHGFGHPNSLSHYRSYQKIVEQAALYCEKMQKGASLPSKEYLIPGQKPFENMSNEFFVEWRMRSYHKKARKEMLDFNQAYSRSS.

Disordered stretches follow at residues 25 to 49 and 150 to 173; these read CEPS…SAKM and LSTT…NQEK. A compositionally biased stretch (polar residues) spans 150–169; the sequence is LSTTSANFTPDWNTTTNGPC. Residues 301–430 are H-S-H (helix-span-helix), dimerization; the sequence is QRQRKVTCFS…IVEQAALYCE (130 aa).

It belongs to the AP-2 family. In terms of assembly, binds DNA as a dimer.

The protein localises to the nucleus. Sequence-specific DNA-binding protein that interacts with enhancer elements to regulate transcription of selected genes. Required for neuroblast and epidermal morphogenesis, perhaps acting in cooperation with transcription factor aptf-2. This Caenorhabditis elegans protein is Transcription factor aptf-4.